The sequence spans 555 residues: Tetracycline 7-halogenase (555 aa).

An FAD-binding site is contributed by 22-27; that stretch reads GSGLSG.

The protein belongs to the flavin-dependent halogenase family. Bacterial tryptophan halogenase subfamily. As to quaternary structure, homodimer.

The enzyme catalyses tetracycline + FADH2 + chloride + O2 = 7-chlorotetracycline + FAD + 2 H2O + H(+). The protein operates within antibiotic biosynthesis. Its function is as follows. Involved in the biosynthesis of chlorotetracycline (CTC), an important member from antibiotics tetracycline (TC) family, which inhibits protein synthesis in bacteria and is widely involved in clinical therapy, animal feeds and aquaculture. Utilizes FADH(2) supplied by the flavin reductase CtcQ, to catalyze the chlorination of tetracycline (TC) at C7 position, leading to the production of 7-chlorotetracycline. The enzyme forms a lysine chloramine intermediate on an internal lysine residue before transferring the chlorine to the substrate. It is stereo-selective for the 4S (natural) isomer of tetracycline. In Kitasatospora aureofaciens (Streptomyces aureofaciens), this protein is Tetracycline 7-halogenase.